The chain runs to 227 residues: Cytochrome c oxidase subunit 2 (227 aa).

Over 1–14 (MAYPFQMGLQDATS) the chain is Mitochondrial intermembrane. The helical transmembrane segment at 15-45 (PIMEELLHFHDHTLMIVFLISSLVLYIISLM) threads the bilayer. Over 46 to 59 (LTTKLTHTSTMDAQ) the chain is Mitochondrial matrix. A helical transmembrane segment spans residues 60–87 (EVETIWTILPAIILILIALPSLRILYMM). At 88–227 (DEINNPSLTV…HFEKWSASLL (140 aa)) the chain is on the mitochondrial intermembrane side. H161, C196, E198, C200, H204, and M207 together coordinate Cu cation. E198 is a binding site for Mg(2+).

The protein belongs to the cytochrome c oxidase subunit 2 family. As to quaternary structure, component of the cytochrome c oxidase (complex IV, CIV), a multisubunit enzyme composed of 14 subunits. The complex is composed of a catalytic core of 3 subunits MT-CO1, MT-CO2 and MT-CO3, encoded in the mitochondrial DNA, and 11 supernumerary subunits COX4I, COX5A, COX5B, COX6A, COX6B, COX6C, COX7A, COX7B, COX7C, COX8 and NDUFA4, which are encoded in the nuclear genome. The complex exists as a monomer or a dimer and forms supercomplexes (SCs) in the inner mitochondrial membrane with NADH-ubiquinone oxidoreductase (complex I, CI) and ubiquinol-cytochrome c oxidoreductase (cytochrome b-c1 complex, complex III, CIII), resulting in different assemblies (supercomplex SCI(1)III(2)IV(1) and megacomplex MCI(2)III(2)IV(2)). Found in a complex with TMEM177, COA6, COX18, COX20, SCO1 and SCO2. Interacts with TMEM177 in a COX20-dependent manner. Interacts with COX20. Interacts with COX16. Cu cation is required as a cofactor.

It is found in the mitochondrion inner membrane. It catalyses the reaction 4 Fe(II)-[cytochrome c] + O2 + 8 H(+)(in) = 4 Fe(III)-[cytochrome c] + 2 H2O + 4 H(+)(out). In terms of biological role, component of the cytochrome c oxidase, the last enzyme in the mitochondrial electron transport chain which drives oxidative phosphorylation. The respiratory chain contains 3 multisubunit complexes succinate dehydrogenase (complex II, CII), ubiquinol-cytochrome c oxidoreductase (cytochrome b-c1 complex, complex III, CIII) and cytochrome c oxidase (complex IV, CIV), that cooperate to transfer electrons derived from NADH and succinate to molecular oxygen, creating an electrochemical gradient over the inner membrane that drives transmembrane transport and the ATP synthase. Cytochrome c oxidase is the component of the respiratory chain that catalyzes the reduction of oxygen to water. Electrons originating from reduced cytochrome c in the intermembrane space (IMS) are transferred via the dinuclear copper A center (CU(A)) of subunit 2 and heme A of subunit 1 to the active site in subunit 1, a binuclear center (BNC) formed by heme A3 and copper B (CU(B)). The BNC reduces molecular oxygen to 2 water molecules using 4 electrons from cytochrome c in the IMS and 4 protons from the mitochondrial matrix. The protein is Cytochrome c oxidase subunit 2 (MT-CO2) of Ailurus fulgens (Himalayan red panda).